The sequence spans 316 residues: Melanocyte-stimulating hormone receptor (316 aa).

Residues 1-37 (MPMQGAHRKLLGSLNSTPTATSNLGLAANHTGAPCLE) are Extracellular-facing. An N-linked (GlcNAc...) asparagine glycan is attached at asparagine 29. The helical transmembrane segment at 38 to 63 (VSIPDGLFLSLGLVSLVENVLVVAAI) threads the bilayer. The Cytoplasmic portion of the chain corresponds to 64–72 (AKNRNLHSS). A helical membrane pass occupies residues 73 to 93 (MYCFICCLALSDLLVSGSNML). Over 94–118 (ETAVILLLEAGALATRTSVVQQLHN) the chain is Extracellular. A helical transmembrane segment spans residues 119–140 (TIDVLTCSSMLCSLCFLGAIAV). Residues 141–163 (DRYISIFYALRYHSIMTLPRAQR) lie on the Cytoplasmic side of the membrane. The helical transmembrane segment at 164-183 (AIAAIWVASVLSSTLFITYY) threads the bilayer. Residues 184-191 (DHAAVLLC) are Extracellular-facing. The chain crosses the membrane as a helical span at residues 192 to 211 (LVVFFLAMLVLMAVLYVHML). Residues 212–240 (ARACQHAHGIIRLHKRQSPAHQGFGLRGA) are Cytoplasmic-facing. A helical transmembrane segment spans residues 241–266 (ATLTILLGIFFLCWGPFFLHLTLVVF). The Extracellular portion of the chain corresponds to 267-279 (CPQHLTCSCIFKN). The chain crosses the membrane as a helical span at residues 280-300 (FKVFLTLIICNTIIDPLIYAF). Residues 301–316 (RSQELRRTLKEVLCSW) are Cytoplasmic-facing. The S-palmitoyl cysteine moiety is linked to residue cysteine 314.

This sequence belongs to the G-protein coupled receptor 1 family. Interacts with MGRN1, but does not undergo MGRN1-mediated ubiquitination; this interaction competes with GNAS-binding and thus inhibits agonist-induced cAMP production. Interacts with OPN3; the interaction results in a decrease in MC1R-mediated cAMP signaling and ultimately a decrease in melanin production in melanocytes.

The protein resides in the cell membrane. In terms of biological role, receptor for MSH (alpha, beta and gamma) and ACTH. The activity of this receptor is mediated by G proteins which activate adenylate cyclase. Mediates melanogenesis, the production of eumelanin (black/brown) and phaeomelanin (red/yellow), via regulation of cAMP signaling in melanocytes. In Leontocebus fuscicollis (Brown-mantled tamarin), this protein is Melanocyte-stimulating hormone receptor (MC1R).